A 337-amino-acid polypeptide reads, in one-letter code: Glucokinase (337 aa).

Residue 11–16 coordinates ATP; the sequence is ADIGGT.

It belongs to the bacterial glucokinase family.

It localises to the cytoplasm. It carries out the reaction D-glucose + ATP = D-glucose 6-phosphate + ADP + H(+). This Xylella fastidiosa (strain 9a5c) protein is Glucokinase.